Consider the following 199-residue polypeptide: Large ribosomal subunit protein bL9 (199 aa).

The span at 149–166 shows a compositional bias: basic and acidic residues; sequence AEAERINRGEDINSRQED. Residues 149 to 199 are disordered; sequence AEAERINRGEDINSRQEDQDAAAEAIAAAGEFFDPEAQDETPETEAASEQQ. The segment covering 181-191 has biased composition (acidic residues); sequence FDPEAQDETPE.

This sequence belongs to the bacterial ribosomal protein bL9 family.

Functionally, binds to the 23S rRNA. The sequence is that of Large ribosomal subunit protein bL9 from Afipia carboxidovorans (strain ATCC 49405 / DSM 1227 / KCTC 32145 / OM5) (Oligotropha carboxidovorans).